The sequence spans 716 residues: Protein C-mannosyl-transferase DPY19L3 (716 aa).

Topologically, residues 1–43 (MMYIRQRKETKPIEVSEDFPSPKEDVKLEKKLPSGCASGRFWK) are cytoplasmic. A helical membrane pass occupies residues 44 to 64 (ILSSAVGGTVALCIGLLTSVY). At 65–154 (LATLHENDLW…RVLPIQKYLE (90 aa)) the chain is on the lumenal side. N-linked (GlcNAc...) asparagine glycosylation is present at asparagine 118. Residues 155–182 (PVYFYIYTLFGLQAVYVTALYITSWLLS) traverse the membrane as a helical segment. At 183 to 184 (GT) the chain is on the cytoplasmic side. The segment at residues 185–197 (WLSGLLAALWYVT) is an intramembrane region (name=3). Residues 198-215 (NRIDTTRVEFTIPLRENW) are Cytoplasmic-facing. Positions 216–230 (ALPFFAIQIAAITYF) form an intramembrane region, name=4. Residues 231–239 (LRPNLQPLS) lie on the Cytoplasmic side of the membrane. The chain crosses the membrane as a helical span at residues 240-256 (ERLTLLAIFVSTFLFSL). The Lumenal segment spans residues 257-262 (TWQFNQ). The chain crosses the membrane as a helical span at residues 263-279 (FMMLLQALVLFILDSLD). Residues 280–289 (MLPAMKATWL) lie on the Cytoplasmic side of the membrane. The chain crosses the membrane as a helical span at residues 290 to 306 (YGIQISCLLLVCTLQFF). The Lumenal segment spans residues 307 to 308 (NS). Residues 309 to 323 (MILGSLLISFNLSVL) form a helical membrane-spanning segment. At 324-338 (IVRKLQKNLKTGSFL) the chain is on the cytoplasmic side. A helical transmembrane segment spans residues 339–359 (TRIWKLLLHLLLVFCLTLFLN). The Lumenal portion of the chain corresponds to 360-414 (NIIKKVLNLKSDEHIFKFLKAKFGFGATRDFDANLYLCEEAFGLLPLNTFQRLSE). Residues 415 to 437 (TLLFYAYMFVLVVTVVTASVVAF) form a helical membrane-spanning segment. The Cytoplasmic portion of the chain corresponds to 438-465 (HNLSDSTSLKSMDQTRKRAVDLKPEAAY). Residues 466 to 485 (NLIHTILFGVLALSTMRMKY) traverse the membrane as a helical segment. Topologically, residues 486–487 (LW) are lumenal. Residues 488–499 (TSHMCVFASFGL) form a helical membrane-spanning segment. The Cytoplasmic portion of the chain corresponds to 500–522 (CSSEVWELLLRLVHLCNPKRIWV). A helical membrane pass occupies residues 523–539 (LRYLVPVLTLLYLCYKS). Residues 540–716 (WPGVMDELSE…FHVYKLSRNK (177 aa)) lie on the Lumenal side of the membrane. The N-linked (GlcNAc...) asparagine glycan is linked to asparagine 704.

The protein belongs to the dpy-19 family.

It is found in the endoplasmic reticulum membrane. It catalyses the reaction L-tryptophyl-[protein] + a di-trans,poly-cis-dolichyl beta-D-mannosyl phosphate = C-alpha-D-mannosyl-L-tryptophyl-[protein] + a di-trans,poly-cis-dolichyl phosphate + H(+). It functions in the pathway protein modification; protein glycosylation. C-mannosyltransferase that mediates C-mannosylation of tryptophan residues on target proteins. The reaction occurs on the luminal side of the endoplasmic reticulum and involves the transfer of a mannose unit from a dolichylphosphate mannose (Dol-P-Man) donor to an acceptor protein containing a WxxW or WxxC consensus sequence. C-mannosylates RSPO1, a Wnt signaling regulator, preferentially at the first Trp residue in the sequence WxxW. C-mannosylates the netrin receptor UNC5A, preferentially at the third tryptophan of WxxWxxWxxC sequence. The chain is Protein C-mannosyl-transferase DPY19L3 (Dpy19l3) from Mus musculus (Mouse).